The chain runs to 157 residues: Ribonuclease H (157 aa).

The region spanning 1–146 is the RNase H type-1 domain; the sequence is MPDLVAYTDG…ADELARAGMA (146 aa). The Mg(2+) site is built by Asp9, Glu52, Asp74, and Asp138.

It belongs to the RNase H family. Monomer. Mg(2+) is required as a cofactor.

The protein resides in the cytoplasm. The enzyme catalyses Endonucleolytic cleavage to 5'-phosphomonoester.. In terms of biological role, endonuclease that specifically degrades the RNA of RNA-DNA hybrids. The protein is Ribonuclease H of Jannaschia sp. (strain CCS1).